We begin with the raw amino-acid sequence, 283 residues long: Bifunctional protein FolD (283 aa).

NADP(+) contacts are provided by residues 163–165 (GRS), Ser-188, and Ile-229.

The protein belongs to the tetrahydrofolate dehydrogenase/cyclohydrolase family. As to quaternary structure, homodimer.

It catalyses the reaction (6R)-5,10-methylene-5,6,7,8-tetrahydrofolate + NADP(+) = (6R)-5,10-methenyltetrahydrofolate + NADPH. The catalysed reaction is (6R)-5,10-methenyltetrahydrofolate + H2O = (6R)-10-formyltetrahydrofolate + H(+). Its pathway is one-carbon metabolism; tetrahydrofolate interconversion. Its function is as follows. Catalyzes the oxidation of 5,10-methylenetetrahydrofolate to 5,10-methenyltetrahydrofolate and then the hydrolysis of 5,10-methenyltetrahydrofolate to 10-formyltetrahydrofolate. The protein is Bifunctional protein FolD of Latilactobacillus sakei subsp. sakei (strain 23K) (Lactobacillus sakei subsp. sakei).